We begin with the raw amino-acid sequence, 254 residues long: Phosphoribosylaminoimidazole-succinocarboxamide synthase (254 aa).

The protein belongs to the SAICAR synthetase family.

The catalysed reaction is 5-amino-1-(5-phospho-D-ribosyl)imidazole-4-carboxylate + L-aspartate + ATP = (2S)-2-[5-amino-1-(5-phospho-beta-D-ribosyl)imidazole-4-carboxamido]succinate + ADP + phosphate + 2 H(+). It participates in purine metabolism; IMP biosynthesis via de novo pathway; 5-amino-1-(5-phospho-D-ribosyl)imidazole-4-carboxamide from 5-amino-1-(5-phospho-D-ribosyl)imidazole-4-carboxylate: step 1/2. This Gluconacetobacter diazotrophicus (strain ATCC 49037 / DSM 5601 / CCUG 37298 / CIP 103539 / LMG 7603 / PAl5) protein is Phosphoribosylaminoimidazole-succinocarboxamide synthase.